Consider the following 319-residue polypeptide: tRNA-cytidine(32) 2-sulfurtransferase (319 aa).

A PP-loop motif motif is present at residues 43-48; sequence SGGKDS. Cys118, Cys121, and Cys209 together coordinate [4Fe-4S] cluster.

Belongs to the TtcA family. As to quaternary structure, homodimer. Mg(2+) serves as cofactor. Requires [4Fe-4S] cluster as cofactor.

Its subcellular location is the cytoplasm. The enzyme catalyses cytidine(32) in tRNA + S-sulfanyl-L-cysteinyl-[cysteine desulfurase] + AH2 + ATP = 2-thiocytidine(32) in tRNA + L-cysteinyl-[cysteine desulfurase] + A + AMP + diphosphate + H(+). It functions in the pathway tRNA modification. Its function is as follows. Catalyzes the ATP-dependent 2-thiolation of cytidine in position 32 of tRNA, to form 2-thiocytidine (s(2)C32). The sulfur atoms are provided by the cysteine/cysteine desulfurase (IscS) system. The protein is tRNA-cytidine(32) 2-sulfurtransferase of Neisseria meningitidis serogroup C (strain 053442).